The following is a 298-amino-acid chain: Protease HtpX homolog (298 aa).

Helical transmembrane passes span 14–34 (ILVM…IGYL) and 39–59 (VIGG…VIIG). His-144 lines the Zn(2+) pocket. Glu-145 is a catalytic residue. His-148 is a binding site for Zn(2+). 2 helical membrane-spanning segments follow: residues 159–179 (IALA…NFWW) and 195–215 (IFAI…ATIA). Position 224 (Glu-224) interacts with Zn(2+).

It belongs to the peptidase M48B family. Zn(2+) serves as cofactor.

It localises to the cell membrane. The protein is Protease HtpX homolog of Limosilactobacillus reuteri (strain DSM 20016) (Lactobacillus reuteri).